A 304-amino-acid polypeptide reads, in one-letter code: Iron(III) enterobactin esterase (304 aa).

An N-terminal signal peptide occupies residues 1-25 (MRTSLLVAALGLALAAALPGGAPLA). Active-site charge relay system residues include Ser182, Glu242, and His283.

The protein belongs to the esterase D family. Monomer.

Its subcellular location is the periplasm. The enzyme catalyses Fe(III)-enterobactin + 3 H2O + H(+) = Fe(III)-[N-(2,3-dihydroxybenzoyl)-L-serine] + 2 N-(2,3-dihydroxybenzoyl)-L-serine. It carries out the reaction Fe(III)-enterobactin + H2O = Fe(III)-[N-(2,3-dihydroxybenzoyl)-L-serine]3 + H(+). The catalysed reaction is Fe(III)-[N-(2,3-dihydroxybenzoyl)-L-serine]3 + H2O + H(+) = Fe(III)-[N-(2,3-dihydroxybenzoyl)-L-serine]2 + N-(2,3-dihydroxybenzoyl)-L-serine. It catalyses the reaction Fe(III)-[N-(2,3-dihydroxybenzoyl)-L-serine]2 + H2O + H(+) = Fe(III)-[N-(2,3-dihydroxybenzoyl)-L-serine] + N-(2,3-dihydroxybenzoyl)-L-serine. Its function is as follows. Catalyzes the hydrolysis of ferric enterobactin (Fe-Ent). Hydrolyzes Fe-Ent into three molecules of 2,3-dihydroxybenzoylserine (DHBS) still complexed with ferric iron. Iron reduction is necessary to obtain complete release of the metal from DHBS. It can hydrolyze salmochelin S4 (diglucosyl-C-Ent) but is not involved in iron acquisition by this siderophore. The sequence is that of Iron(III) enterobactin esterase from Pseudomonas aeruginosa (strain ATCC 15692 / DSM 22644 / CIP 104116 / JCM 14847 / LMG 12228 / 1C / PRS 101 / PAO1).